A 111-amino-acid chain; its full sequence is Large ribosomal subunit protein uL23 (111 aa).

It belongs to the universal ribosomal protein uL23 family. As to quaternary structure, part of the 50S ribosomal subunit. Contacts protein L29, and trigger factor when it is bound to the ribosome.

Functionally, one of the early assembly proteins it binds 23S rRNA. One of the proteins that surrounds the polypeptide exit tunnel on the outside of the ribosome. Forms the main docking site for trigger factor binding to the ribosome. The protein is Large ribosomal subunit protein uL23 of Nitrosomonas europaea (strain ATCC 19718 / CIP 103999 / KCTC 2705 / NBRC 14298).